Consider the following 308-residue polypeptide: Phosphoribosylaminoimidazole-succinocarboxamide synthase (308 aa).

Belongs to the SAICAR synthetase family.

It catalyses the reaction 5-amino-1-(5-phospho-D-ribosyl)imidazole-4-carboxylate + L-aspartate + ATP = (2S)-2-[5-amino-1-(5-phospho-beta-D-ribosyl)imidazole-4-carboxamido]succinate + ADP + phosphate + 2 H(+). It participates in purine metabolism; IMP biosynthesis via de novo pathway; 5-amino-1-(5-phospho-D-ribosyl)imidazole-4-carboxamide from 5-amino-1-(5-phospho-D-ribosyl)imidazole-4-carboxylate: step 1/2. The chain is Phosphoribosylaminoimidazole-succinocarboxamide synthase from Xylella fastidiosa (strain Temecula1 / ATCC 700964).